The primary structure comprises 405 residues: SPbeta prophage-derived uncharacterized protein YomR (405 aa).

The stretch at 9 to 36 (QLKQNNIQINSLRGSNDRAEKHMLEHEQ) forms a coiled coil.

This Bacillus subtilis (strain 168) protein is SPbeta prophage-derived uncharacterized protein YomR (yomR).